Reading from the N-terminus, the 395-residue chain is uncharacterized protein (395 aa).

Over residues 286–306 (SSNKSSESTMTSPLDSASSLH) the composition is skewed to low complexity. The segment at 286–395 (SSNKSSESTM…RNDDSGLESV (110 aa)) is disordered. Positions 350 to 362 (RPPPPSVHPPIFP) are enriched in pro residues. The span at 364 to 385 (QTQLFHPPTYSTQRHVTSPNSS) shows a compositional bias: polar residues.

This is an uncharacterized protein from Caenorhabditis elegans.